We begin with the raw amino-acid sequence, 184 residues long: uncharacterized protein (184 aa).

The protein belongs to the PhzF family.

The protein localises to the cytoplasm. It is found in the nucleus. This is an uncharacterized protein from Schizosaccharomyces pombe (strain 972 / ATCC 24843) (Fission yeast).